The chain runs to 437 residues: Histidinol dehydrogenase (437 aa).

3 residues coordinate NAD(+): tyrosine 133, glutamine 191, and asparagine 214. Positions 240, 262, and 265 each coordinate substrate. 2 residues coordinate Zn(2+): glutamine 262 and histidine 265. Residues glutamate 329 and histidine 330 each act as proton acceptor in the active site. Histidine 330, aspartate 363, glutamate 417, and histidine 422 together coordinate substrate. Zn(2+) is bound at residue aspartate 363. Histidine 422 is a binding site for Zn(2+).

It belongs to the histidinol dehydrogenase family. In terms of assembly, homodimer. Zn(2+) is required as a cofactor.

The catalysed reaction is L-histidinol + 2 NAD(+) + H2O = L-histidine + 2 NADH + 3 H(+). Its pathway is amino-acid biosynthesis; L-histidine biosynthesis; L-histidine from 5-phospho-alpha-D-ribose 1-diphosphate: step 9/9. Catalyzes the sequential NAD-dependent oxidations of L-histidinol to L-histidinaldehyde and then to L-histidine. This Blochmanniella floridana protein is Histidinol dehydrogenase.